Reading from the N-terminus, the 435-residue chain is Aspartate--tRNA(Asp/Asn) ligase (435 aa).

Glu-163 is a binding site for L-aspartate. An aspartate region spans residues 185–188; it reads QLYK. An L-aspartate-binding site is contributed by Arg-206. ATP is bound by residues 206-208, 214-216, and Glu-358; these read RAE and RHL. The L-aspartate site is built by Ser-361 and Arg-365. ATP is bound at residue 406–409; the sequence is GAER.

It belongs to the class-II aminoacyl-tRNA synthetase family. Type 2 subfamily. As to quaternary structure, homodimer.

The protein localises to the cytoplasm. The catalysed reaction is tRNA(Asx) + L-aspartate + ATP = L-aspartyl-tRNA(Asx) + AMP + diphosphate. In terms of biological role, aspartyl-tRNA synthetase with relaxed tRNA specificity since it is able to aspartylate not only its cognate tRNA(Asp) but also tRNA(Asn). Reaction proceeds in two steps: L-aspartate is first activated by ATP to form Asp-AMP and then transferred to the acceptor end of tRNA(Asp/Asn). Is slightly more efficient at aminoacylating tRNA(Asn) over tRNA(Asp). This is Aspartate--tRNA(Asp/Asn) ligase (aspS2) from Deinococcus radiodurans (strain ATCC 13939 / DSM 20539 / JCM 16871 / CCUG 27074 / LMG 4051 / NBRC 15346 / NCIMB 9279 / VKM B-1422 / R1).